Here is a 173-residue protein sequence, read N- to C-terminus: PTS system glucose-specific EIIA component (173 aa).

In terms of domain architecture, PTS EIIA type-1 spans 40 to 144 (DPTFAQKMMG…STVTPVVVTN (105 aa)). The Zn(2+) site is built by His-77 and His-92. Catalysis depends on His-92, which acts as the Tele-phosphohistidine intermediate; for EIIA activity. At His-92 the chain carries Phosphohistidine; by HPr.

Heterodimer with glycerol kinase (glpk). Zn(2+) serves as cofactor.

The protein localises to the cytoplasm. Functionally, the phosphoenolpyruvate-dependent sugar phosphotransferase system (sugar PTS), a major carbohydrate active transport system, catalyzes the phosphorylation of incoming sugar substrates concomitantly with their translocation across the cell membrane. The enzyme II complex composed of PtsG and Crr is involved in glucose transport. The sequence is that of PTS system glucose-specific EIIA component (crr) from Halalkalibacterium halodurans (strain ATCC BAA-125 / DSM 18197 / FERM 7344 / JCM 9153 / C-125) (Bacillus halodurans).